Consider the following 210-residue polypeptide: Ribonuclease HII (210 aa).

The RNase H type-2 domain maps to 18-210 (GLIAGVDEVG…FKPVKALLGL (193 aa)). Residues aspartate 24, glutamate 25, and aspartate 116 each contribute to the a divalent metal cation site.

It belongs to the RNase HII family. The cofactor is Mn(2+). It depends on Mg(2+) as a cofactor.

The protein resides in the cytoplasm. The enzyme catalyses Endonucleolytic cleavage to 5'-phosphomonoester.. Its function is as follows. Endonuclease that specifically degrades the RNA of RNA-DNA hybrids. In Shewanella baltica (strain OS223), this protein is Ribonuclease HII.